Reading from the N-terminus, the 1491-residue chain is Copper-transporting ATPase 1 (1491 aa).

Over 1–644 (MEPSVDANSI…KREIKQWRGS (644 aa)) the chain is Cytoplasmic. 2 consecutive HMA domains span residues 8-74 (NSIT…FDAL) and 85-151 (TNTV…LDMG). Cu(+) is bound by residues Thr18, Cys19, and Cys22. Thr152 carries the phosphothreonine modification. One can recognise an HMA 3 domain in the interval 171–237 (VMLKMKVEGM…QIEAVGFPAF (67 aa)). 2 residues coordinate Cu(+): Cys182 and Cys185. Ser270 carries the post-translational modification Phosphoserine. Positions 277–343 (STTMFTIEGM…AIEAISPGQY (67 aa)) constitute an HMA 4 domain. Cu(+)-binding residues include Cys288 and Cys291. Thr327 carries the phosphothreonine modification. A phosphoserine mark is found at Ser339, Ser353, Ser357, and Ser362. 3 consecutive HMA domains span residues 377-443 (QEAV…FDAA), 479-545 (NKCY…FGAM), and 555-621 (GILE…FEAS). The Cu(+) site is built by Cys388, Cys391, Cys490, Cys493, Cys566, and Cys569. A helical membrane pass occupies residues 645–666 (FLVSLFFCIPVMGLMVYMMVMD). Residues 667-705 (HHLATLHHNQNMSNEEMINMHSAMFLERQILPGLSIMNL) are Extracellular-facing. N-linked (GlcNAc...) asparagine glycosylation occurs at Asn677. A helical transmembrane segment spans residues 706-725 (LSLLLCLPVQFCGGWYFYIQ). The Cytoplasmic segment spans residues 726–732 (AYKALKH). A helical membrane pass occupies residues 733–753 (KTANMDVLIVLATTIAFAYSL). At 754–772 (VILLVAMFERAKVNPITFF) the chain is on the extracellular side. The helical transmembrane segment at 773 to 793 (DTPPMLFVFIALGRWLEHIAK) threads the bilayer. Topologically, residues 794-926 (GKTSEALAKL…SKAPIQQFAD (133 aa)) are cytoplasmic. The helical transmembrane segment at 927–950 (KLSGYFVPFIVLVSIVTLLVWIII) threads the bilayer. Residues 951–980 (GFQNFEIVETYFPGYNRSISRTETIIRFAF) lie on the Extracellular side of the membrane. N-linked (GlcNAc...) asparagine glycosylation occurs at Asn966. Residues 981 to 1002 (QASITVLCIACPCSLGLATPTA) form a helical membrane-spanning segment. Topologically, residues 1003–1347 (VMVGTGVGAQ…LSRKTVKRIR (345 aa)) are cytoplasmic. Asp1035 acts as the 4-aspartylphosphate intermediate in catalysis. Glu1072 provides a ligand contact to ATP. At Thr1203 the chain carries Phosphothreonine. Mg(2+) is bound by residues Asp1292 and Asp1296. A helical transmembrane segment spans residues 1348–1365 (INFVFALIYNLVGIPIAA). At 1366 to 1376 (GVFLPIGLVLQ) the chain is on the extracellular side. Residues 1377-1396 (PWMGSAAMAASSVSVVLSSL) traverse the membrane as a helical segment. Topologically, residues 1397 to 1491 (FLKLYRKPTY…DFREDDDTTL (95 aa)) are cytoplasmic. Phosphoserine is present on residues Ser1421, Ser1423, Ser1451, Ser1454, and Ser1457. The short motif at 1458–1459 (LL) is the Endocytosis signal element. 4 positions are modified to phosphoserine: Ser1460, Ser1464, Ser1467, and Ser1477. The PDZD11-binding stretch occupies residues 1477-1491 (SLLVGDFREDDDTTL). An Endocytosis signal motif is present at residues 1478–1479 (LL).

The protein belongs to the cation transport ATPase (P-type) (TC 3.A.3) family. Type IB subfamily. In terms of assembly, monomer. Interacts with PDZD11. Interacts with ATOX1 and COMMD1. Interacts with TYRP1. Directly interacts with SOD3; this interaction is copper-dependent and is required for SOD3 activity. Widely expressed. Highly expressed in pituitary endocrine cells. Expressed in melanocytes (at protein level). Expressed in motor neuron (at protein level). Expressed in hippocampal neuron (at protein level). In the kidney, it is detected in the proximal and distal tubules (at protein level). Expressed in aorta (at protein level).

It localises to the golgi apparatus. The protein localises to the trans-Golgi network membrane. It is found in the cell membrane. Its subcellular location is the melanosome membrane. The protein resides in the early endosome membrane. It localises to the cell projection. The protein localises to the axon. It is found in the dendrite. Its subcellular location is the postsynaptic density. The enzyme catalyses Cu(+)(in) + ATP + H2O = Cu(+)(out) + ADP + phosphate + H(+). Functionally, ATP-driven copper (Cu(+)) ion pump that plays an important role in intracellular copper ion homeostasis. Within a catalytic cycle, acquires Cu(+) ion from donor protein on the cytoplasmic side of the membrane and delivers it to acceptor protein on the lumenal side. The transfer of Cu(+) ion across the membrane is coupled to ATP hydrolysis and is associated with a transient phosphorylation that shifts the pump conformation from inward-facing to outward-facing state. Under physiological conditions, at low cytosolic copper concentration, it is localized at the trans-Golgi network (TGN) where it transfers Cu(+) ions to cuproenzymes of the secretory pathway. Upon elevated cytosolic copper concentrations, it relocalizes to the plasma membrane where it is responsible for the export of excess Cu(+) ions. May play a dual role in neuron function and survival by regulating cooper efflux and neuronal transmission at the synapse as well as by supplying Cu(+) ions to enzymes such as PAM, TYR and SOD3. In the melanosomes of pigmented cells, provides copper cofactor to TYR to form an active TYR holoenzyme for melanin biosynthesis. This chain is Copper-transporting ATPase 1, found in Mus musculus (Mouse).